A 206-amino-acid polypeptide reads, in one-letter code: IMPACT family member HI_0722 (206 aa).

The protein belongs to the IMPACT family.

The polypeptide is IMPACT family member HI_0722 (Haemophilus influenzae (strain ATCC 51907 / DSM 11121 / KW20 / Rd)).